Consider the following 96-residue polypeptide: Co-chaperonin GroES (96 aa).

Belongs to the GroES chaperonin family. Heptamer of 7 subunits arranged in a ring. Interacts with the chaperonin GroEL.

The protein localises to the cytoplasm. Together with the chaperonin GroEL, plays an essential role in assisting protein folding. The GroEL-GroES system forms a nano-cage that allows encapsulation of the non-native substrate proteins and provides a physical environment optimized to promote and accelerate protein folding. GroES binds to the apical surface of the GroEL ring, thereby capping the opening of the GroEL channel. In Leptospira interrogans serogroup Icterohaemorrhagiae serovar copenhageni (strain Fiocruz L1-130), this protein is Co-chaperonin GroES.